The sequence spans 616 residues: Membrane protein insertase YidC (616 aa).

The chain crosses the membrane as a helical span at residues 8–28 (MFVAIALSLVVLLGWHYFVTG). Residues 33 to 85 (RQRQAAQSQTAQTGAPQTADGIPSPSPREGGPNAPAPGTLPGAAAQGPVSRED) are disordered. 2 stretches are compositionally biased toward low complexity: residues 36–51 (QAAQSQTAQTGAPQTA) and 62–80 (GGPNAPAPGTLPGAAAQGP). The next 4 membrane-spanning stretches (helical) occupy residues 386–406 (LLGNFGVSILLVTLILKLFFL), 460–480 (WPVLIQIPVFFALYKVLFITI), 516–536 (YIPIHLGVWPIIMGITMFIQM), and 551–571 (FAFMPIVFTFMLGSFPAGLVI).

The protein belongs to the OXA1/ALB3/YidC family. Type 1 subfamily. In terms of assembly, interacts with the Sec translocase complex via SecD. Specifically interacts with transmembrane segments of nascent integral membrane proteins during membrane integration.

It localises to the cell inner membrane. Required for the insertion and/or proper folding and/or complex formation of integral membrane proteins into the membrane. Involved in integration of membrane proteins that insert both dependently and independently of the Sec translocase complex, as well as at least some lipoproteins. Aids folding of multispanning membrane proteins. The protein is Membrane protein insertase YidC of Methylorubrum extorquens (strain PA1) (Methylobacterium extorquens).